The chain runs to 447 residues: Alpha-1,6-mannosyl-glycoprotein 2-beta-N-acetylglucosaminyltransferase (447 aa).

Over 1 to 9 (MRFRIYKRK) the chain is Cytoplasmic. The chain crosses the membrane as a helical; Signal-anchor for type II membrane protein span at residues 10-29 (VLILTLVVAACGFVLWSSNG). Over 30-447 (RQRKNEALAP…ELCKSYRRLQ (418 aa)) the chain is Lumenal. N-linked (GlcNAc...) asparagine glycosylation is found at Asn-69 and Asn-86. Residues 123-127 (QVHNR) and Asp-154 contribute to the substrate site. The cysteines at positions 196 and 210 are disulfide-linked. Residue 229-233 (QTKHH) participates in substrate binding. Residue Asp-261 participates in Mn(2+) binding. Cys-283 and Cys-286 are oxidised to a cystine. Arg-298 is a binding site for substrate. 3 disulfide bridges follow: Cys-334–Cys-357, Cys-339–Cys-440, and Cys-378–Cys-386. His-374 is a binding site for Mn(2+).

It belongs to the glycosyltransferase 16 (GT16) protein family. As to quaternary structure, homodimer. It depends on Mn(2+) as a cofactor.

It localises to the golgi apparatus membrane. The catalysed reaction is an N(4)-{beta-D-GlcNAc-(1-&gt;2)-alpha-D-Man-(1-&gt;3)-[alpha-D-Man-(1-&gt;6)]-beta-D-Man-(1-&gt;4)-beta-D-GlcNAc-(1-&gt;4)-beta-D-GlcNAc}-L-asparaginyl-[protein] + UDP-N-acetyl-alpha-D-glucosamine = N(4)-{beta-D-GlcNAc-(1-&gt;2)-alpha-D-Man-(1-&gt;3)-[beta-D-GlcNAc-(1-&gt;2)-alpha-D-Man-(1-&gt;6)]-beta-D-Man-(1-&gt;4)-beta-D-GlcNAc-(1-&gt;4)-beta-D-GlcNAc}-L-asparaginyl-[protein] + UDP + H(+). The protein operates within protein modification; protein glycosylation. Plays an essential role in protein N-glycosylation. Catalyzes the transfer of N-acetylglucosamine (GlcNAc) onto the free terminal mannose moiety in the core structure of the nascent N-linked glycan chain, giving rise to the second branch in complex glycans. This chain is Alpha-1,6-mannosyl-glycoprotein 2-beta-N-acetylglucosaminyltransferase (MGAT2), found in Homo sapiens (Human).